The sequence spans 216 residues: Octanoyltransferase (216 aa).

A BPL/LPL catalytic domain is found at 31–205; that stretch reads STTRDEVWLV…ELVTLLDYEQ (175 aa). Residues 70-77, 137-139, and 150-152 each bind substrate; these read RGGQVTYH, SLG, and GLA. C168 (acyl-thioester intermediate) is an active-site residue.

It belongs to the LipB family.

It is found in the cytoplasm. The enzyme catalyses octanoyl-[ACP] + L-lysyl-[protein] = N(6)-octanoyl-L-lysyl-[protein] + holo-[ACP] + H(+). It participates in protein modification; protein lipoylation via endogenous pathway; protein N(6)-(lipoyl)lysine from octanoyl-[acyl-carrier-protein]: step 1/2. Its function is as follows. Catalyzes the transfer of endogenously produced octanoic acid from octanoyl-acyl-carrier-protein onto the lipoyl domains of lipoate-dependent enzymes. Lipoyl-ACP can also act as a substrate although octanoyl-ACP is likely to be the physiological substrate. This is Octanoyltransferase from Vibrio cholerae serotype O1 (strain ATCC 39315 / El Tor Inaba N16961).